The chain runs to 455 residues: Oxidative stress induced growth inhibitor homolog osgn-1 (455 aa).

It belongs to the OKL38 family. It depends on NADPH as a cofactor.

The protein localises to the midbody. Functionally, monooxygenase catalytic activity. Involved in regulation of cytokinesis; promotes rho-1/RhoA activity, probably acting locally at the midbody in late cytokinesis. Monooxygenase activity is required to stabilize structures between primordial germ cells (PGCs), termed intercellular bridges. Dispensable for fertility. This chain is Oxidative stress induced growth inhibitor homolog osgn-1, found in Caenorhabditis elegans.